The sequence spans 356 residues: Phosphate acyltransferase (356 aa).

It belongs to the PlsX family. In terms of assembly, homodimer. Probably interacts with PlsY.

Its subcellular location is the cytoplasm. It catalyses the reaction a fatty acyl-[ACP] + phosphate = an acyl phosphate + holo-[ACP]. It functions in the pathway lipid metabolism; phospholipid metabolism. In terms of biological role, catalyzes the reversible formation of acyl-phosphate (acyl-PO(4)) from acyl-[acyl-carrier-protein] (acyl-ACP). This enzyme utilizes acyl-ACP as fatty acyl donor, but not acyl-CoA. In Bartonella henselae (strain ATCC 49882 / DSM 28221 / CCUG 30454 / Houston 1) (Rochalimaea henselae), this protein is Phosphate acyltransferase.